Consider the following 400-residue polypeptide: Beta-ketoadipyl-CoA thiolase (400 aa).

C90 serves as the catalytic Acyl-thioester intermediate. Catalysis depends on proton acceptor residues H356 and C386.

This sequence belongs to the thiolase-like superfamily. Thiolase family.

It carries out the reaction succinyl-CoA + acetyl-CoA = 3-oxoadipyl-CoA + CoA. It functions in the pathway aromatic compound metabolism; beta-ketoadipate pathway; acetyl-CoA and succinyl-CoA from 3-oxoadipate: step 2/2. Functionally, catalyzes thiolytic cleavage of beta-ketoadipyl-CoA to succinyl-CoA and acetyl-CoA. The chain is Beta-ketoadipyl-CoA thiolase (pcaF) from Pseudomonas putida (Arthrobacter siderocapsulatus).